The sequence spans 91 residues: Small ribosomal subunit protein bS20 (91 aa).

Basic and acidic residues predominate over residues 1–21 (MPLHKSAEKRLRQAARRNERN). The tract at residues 1–24 (MPLHKSAEKRLRQAARRNERNRAR) is disordered.

It belongs to the bacterial ribosomal protein bS20 family.

In terms of biological role, binds directly to 16S ribosomal RNA. In Chlorobaculum parvum (strain DSM 263 / NCIMB 8327) (Chlorobium vibrioforme subsp. thiosulfatophilum), this protein is Small ribosomal subunit protein bS20.